The primary structure comprises 44 residues: Thymosin beta (44 aa).

Over residues 1-17 (MSDKPDVKEVESFDKTT) the composition is skewed to basic and acidic residues. Positions 1-44 (MSDKPDVKEVESFDKTTLKKTTTNEKNTLPTKEVIEQEKSGGSD) are disordered. A compositionally biased stretch (low complexity) spans 19 to 32 (KKTTTNEKNTLPTK). Over residues 33-44 (EVIEQEKSGGSD) the composition is skewed to basic and acidic residues.

Belongs to the thymosin beta family.

The protein localises to the cytoplasm. It is found in the cytoskeleton. In terms of biological role, plays an important role in the organization of the cytoskeleton. Binds to and sequesters actin monomers (G actin) and therefore inhibits actin polymerization. This chain is Thymosin beta, found in Gillichthys mirabilis (Long-jawed mudsucker).